Here is a 202-residue protein sequence, read N- to C-terminus: Glycerol-3-phosphate acyltransferase (202 aa).

The next 6 membrane-spanning stretches (helical) occupy residues 3–23 (NLIIYAFIYLLGSIPFGLILA), 61–81 (IATIILDFAKAAIPLLILKFL), 87–107 (LLWSVAVLAIFGHCFSIYLLF), 118–138 (GAMIVLLPLEVLTAFIVWVVI), 144–164 (ISSLASLAALLAFVISSFIFN), and 167–187 (LEIHTHAPVFIIAFIIVYKHL).

Belongs to the PlsY family. As to quaternary structure, probably interacts with PlsX.

The protein localises to the cell inner membrane. The catalysed reaction is an acyl phosphate + sn-glycerol 3-phosphate = a 1-acyl-sn-glycero-3-phosphate + phosphate. It participates in lipid metabolism; phospholipid metabolism. In terms of biological role, catalyzes the transfer of an acyl group from acyl-phosphate (acyl-PO(4)) to glycerol-3-phosphate (G3P) to form lysophosphatidic acid (LPA). This enzyme utilizes acyl-phosphate as fatty acyl donor, but not acyl-CoA or acyl-ACP. The chain is Glycerol-3-phosphate acyltransferase from Campylobacter jejuni subsp. jejuni serotype O:6 (strain 81116 / NCTC 11828).